The following is a 1818-amino-acid chain: Integrin beta-4 (1818 aa).

An N-terminal signal peptide occupies residues Met1–Ala28. Topologically, residues Asn29–Ser712 are extracellular. Residues Arg30 to Arg74 form the PSI domain. Cystine bridges form between Cys31-Cys49, Cys39-Cys457, Cys42-Cys62, Cys52-Cys73, Cys246-Cys289, Cys459-Cys478, Cys470-Cys481, and Cys483-Cys492. In terms of domain architecture, VWFA spans Asp132–Thr310. Positions 140 and 142 each coordinate Mg(2+). Ca(2+)-binding residues include Ser142, Asp145, Asp146, and Asp177. The segment at Trp195 to Pro200 is involved in NRG1- and IGF1-binding. 4 residues coordinate Ca(2+): Asn229, Asp231, Pro233, and Glu234. Residue Glu234 coordinates Mg(2+). Asn328 is a glycosylation site (N-linked (GlcNAc...) asparagine). Glu351 lines the Ca(2+) pocket. I-EGF domains follow at residues Cys459–Asn493, Cys494–Glu539, Tyr540–Asp576, and Cys577–Glu617. The Cell attachment site signature appears at Arg473–Asp475. Asn493 carries N-linked (GlcNAc...) asparagine glycosylation. Intrachain disulfides connect Cys494–Cys522, Cys505–Cys520, Cys514–Cys525, Cys527–Cys538, Cys545–Cys559, Cys553–Cys564, Cys566–Cys575, Cys577–Cys600, Cys584–Cys598, Cys592–Cys603, and Cys605–Cys616. An N-linked (GlcNAc...) asparagine glycan is attached at Asn581. The N-linked (GlcNAc...) asparagine glycan is linked to Asn619. Disulfide bonds link Cys628/Cys673, Cys634/Cys653, Cys637/Cys650, and Cys682/Cys708. N-linked (GlcNAc...) asparagine glycosylation occurs at Asn697. Residues Phe713–Leu733 form a helical membrane-spanning segment. The palmitoylated on several cysteines stretch occupies residues Cys734–Cys751. Residues Cys734 to Thr1818 are Cytoplasmic-facing. The residue at position 773 (Ser773) is a Phosphoserine. The region spanning Val981–Ser1086 is the Calx-beta domain. The Cell attachment site motif lies at Arg1005–Asp1007. Phosphoserine is present on residues Ser1071 and Ser1121. The disordered stretch occupies residues Ile1115–Ala1137. Fibronectin type-III domains are found at residues Ala1131–Glu1220 and Glu1224–Lys1323. The disordered stretch occupies residues Leu1402–Arg1433. A compositionally biased stretch (gly residues) spans Val1415–Trp1426. 3 positions are modified to phosphoserine: Ser1451, Ser1454, and Ser1470. Thr1483 is subject to Phosphothreonine. Ser1490 bears the Phosphoserine mark. A Phosphothreonine modification is found at Thr1526. Fibronectin type-III domains are found at residues Thr1526–Gln1621 and Ala1639–Gly1735. Ser1787 is subject to Phosphoserine.

It belongs to the integrin beta chain family. As to quaternary structure, heterodimer of an alpha and a beta subunit. Beta-4 associates with alpha-6. Interacts (via cytoplasmic region) with COL17A1 (via cytoplasmic region). Interacts (via cytoplasmic region) with DST isoform 3 (via N-terminus). Interacts (via cytoplasmic domain) with DST (via N-terminus). Interacts with RAC1. ITGA6:ITGB4 is found in a ternary complex with NRG1 and ERBB3. ITGA6:ITGB4 is found in a ternary complex with IGF1 and IGF1R. ITGA6:ITGB4 interacts with IGF2. Interacts with TMEM268; this interaction prevents ITGB4 degradation. Palmitoylated by DHHC3 at several cysteines of the membrane-proximal region, enhancing stability and cell surface expression. Palmitoylation also promotes secondary association with tertaspanins.

The protein localises to the cell membrane. It is found in the cell junction. It localises to the hemidesmosome. Integrin alpha-6/beta-4 is a receptor for laminin. It plays a critical structural role in the hemidesmosome of epithelial cells. Is required for the regulation of keratinocyte polarity and motility. ITGA6:ITGB4 binds to NRG1 (via EGF domain) and this binding is essential for NRG1-ERBB signaling. ITGA6:ITGB4 binds to IGF1 and this binding is essential for IGF1 signaling. ITGA6:ITGB4 binds to IGF2 and this binding is essential for IGF2 signaling. The sequence is that of Integrin beta-4 (Itgb4) from Mus musculus (Mouse).